The chain runs to 273 residues: Outer surface protein A (273 aa).

Positions 1–16 are cleaved as a signal peptide; that stretch reads MKKYLLGIGLILALIA. Cysteine 17 carries N-palmitoyl cysteine lipidation. Cysteine 17 carries S-diacylglycerol cysteine lipidation.

This sequence belongs to the OspA lipoprotein family.

The protein resides in the cell outer membrane. Its subcellular location is the cell surface. This Borreliella burgdorferi (Lyme disease spirochete) protein is Outer surface protein A.